Consider the following 551-residue polypeptide: Solute carrier family 22 member 6 (551 aa).

Over 1–9 (MAFNDLLKQ) the chain is Cytoplasmic. The chain crosses the membrane as a helical span at residues 10–30 (VGGVGRFQLIQVTMVVAPLLL). The Extracellular portion of the chain corresponds to 31–135 (MASHNTLQNF…LVCSHRAFRQ (105 aa)). N-linked (GlcNAc...) asparagine glycosylation is found at Asn-39, Asn-56, Asn-92, and Asn-113. The helical transmembrane segment at 136–156 (LAQSLYMVGVLLGAMVFGYLA) threads the bilayer. The Cytoplasmic portion of the chain corresponds to 157–164 (DRLGRRKV). The helical transmembrane segment at 165 to 187 (LILNYLQTAVSGTCAAYAPNYTV) threads the bilayer. Residues 188 to 195 (YCVFRLLS) lie on the Extracellular side of the membrane. A helical membrane pass occupies residues 196–216 (GMSLASIAINCMTLNVEWMPI). Topologically, residues 217-224 (HTRAYVGT) are cytoplasmic. The chain crosses the membrane as a helical span at residues 225–245 (LIGYVYSLGQFLLAGIAYAVP). Over 246–248 (HWR) the chain is Extracellular. Residues 249-269 (HLQLVVSVPFFIAFIYSWFFI) traverse the membrane as a helical segment. Residues 270–337 (ESARWYSSSG…ELLRCPTLRH (68 aa)) lie on the Cytoplasmic side of the membrane. A helical membrane pass occupies residues 338-358 (LFLCLSMLWFATSFAYYGLVM). Residues 359 to 368 (DLQGFGVSMY) are Extracellular-facing. The chain crosses the membrane as a helical span at residues 369-389 (LIQVIFGAVDLPAKFVCFLVI). At 390–395 (NSMGRR) the chain is on the cytoplasmic side. Residues 396-416 (PAQMASLLLAGICILVNGIIP) form a helical membrane-spanning segment. Topologically, residues 417–425 (KSHTIIRTS) are extracellular. The helical transmembrane segment at 426 to 446 (LAVLGKGCLASSFNCIFLYTG) threads the bilayer. Residues 447–484 (ELYPTVIRQTGLGMGSTMARVGSIVSPLVSMTAEFYPS) lie on the Cytoplasmic side of the membrane. Residues 485-505 (MPLFIFGAVPVVASAVTALLP) traverse the membrane as a helical segment. The Extracellular portion of the chain corresponds to 506–551 (ETLGQPLPDTVQDLKSRSRGKQNQQQQEQQKQMMPLQASTQEKNGL). The disordered stretch occupies residues 514-551 (DTVQDLKSRSRGKQNQQQQEQQKQMMPLQASTQEKNGL). A compositionally biased stretch (low complexity) spans 526–537 (KQNQQQQEQQKQ). The span at 542–551 (QASTQEKNGL) shows a compositional bias: polar residues.

Belongs to the major facilitator (TC 2.A.1) superfamily. Organic cation transporter (TC 2.A.1.19) family. In terms of processing, glycosylated. Glycosylation is necessary for proper targeting of the transporter to the plasma membrane. In terms of tissue distribution, highly expressed in kidney; in the particular segment of the proximal tubule. In kidney, found preferentially in the cortex and outer medulla and weakly in the inner medulla. Expressed to a lower extent in brain.

The protein localises to the cell membrane. Its subcellular location is the basolateral cell membrane. The protein resides in the basal cell membrane. The enzyme catalyses (6R)-L-erythro-5,6,7,8-tetrahydrobiopterin(out) + a dicarboxylate(in) = (6R)-L-erythro-5,6,7,8-tetrahydrobiopterin(in) + a dicarboxylate(out). It catalyses the reaction L-erythro-7,8-dihydrobiopterin(out) + a dicarboxylate(in) = L-erythro-7,8-dihydrobiopterin(in) + a dicarboxylate(out). The catalysed reaction is L-sepiapterin(out) + a dicarboxylate(in) = L-sepiapterin(in) + a dicarboxylate(out). It carries out the reaction prostaglandin F2alpha(out) + a dicarboxylate(in) = prostaglandin F2alpha(in) + a dicarboxylate(out). The enzyme catalyses prostaglandin E2(out) + a dicarboxylate(in) = prostaglandin E2(in) + a dicarboxylate(out). It catalyses the reaction 3',5'-cyclic AMP(out) + a dicarboxylate(in) = 3',5'-cyclic AMP(in) + a dicarboxylate(out). The catalysed reaction is 3',5'-cyclic GMP(out) + a dicarboxylate(in) = 3',5'-cyclic GMP(in) + a dicarboxylate(out). It carries out the reaction urate(out) + a dicarboxylate(in) = urate(in) + a dicarboxylate(out). The enzyme catalyses kynurenate(out) + glutarate(in) = kynurenate(in) + glutarate(out). It catalyses the reaction (indol-3-yl)acetate(out) + a dicarboxylate(in) = (indol-3-yl)acetate(in) + a dicarboxylate(out). The catalysed reaction is indoxyl sulfate(out) + a dicarboxylate(in) = indoxyl sulfate(in) + a dicarboxylate(out). It carries out the reaction N-benzoylglycine(out) + a dicarboxylate(in) = N-benzoylglycine(in) + a dicarboxylate(out). The enzyme catalyses 3-carboxy-4-methyl-5-propyl-2-furanpropanoate(out) + a dicarboxylate(in) = 3-carboxy-4-methyl-5-propyl-2-furanpropanoate(in) + a dicarboxylate(out). In terms of biological role, secondary active transporter that functions as a Na(+)-independent organic anion (OA)/dicarboxylate antiporter where the uptake of one molecule of OA into the cell is coupled with an efflux of one molecule of intracellular dicarboxylate such as alpha-ketoglutarate or glutarate. Mediates the uptake of OA across the basolateral side of proximal tubule epithelial cells, thereby contributing to the renal elimination of endogenous OA from the systemic circulation into the urine. Function as a biopterin transporters involved in the uptake and the secretion of coenzymes tetrahydrobiopterin (BH4) dihydrobiopterin (BH2) and sepiapterin to urine, thereby determining baseline levels of blood biopterins. Transports prostaglandin E2 (PGE2) and prostaglandin F2-alpha (PGF2-alpha) and may contribute to their renal excretion. Also mediates the uptake of cyclic nucleotides such as cAMP and cGMP. Involved in the transport of neuroactive tryptophan metabolites kynurenate (KYNA) and xanthurenate (XA) and may contribute to their secretion from the brain. May transport glutamate. Also involved in the disposition of uremic toxins and potentially toxic xenobiotics by the renal organic anion secretory pathway, helping reduce their undesired toxicological effects on the body. Uremic toxins include the indoxyl sulfate (IS), hippurate, indole acetate (IA), 3-carboxy-4- methyl-5-propyl-2-furanpropionate(CMPF) and urate. Xenobiotics include the mycotoxin ochratoxin (OTA). May also contribute to the transport of organic compounds in testes across the blood-testis-barrier. May also work as a bidirectional OA/dicarboxylate exchanger. The chain is Solute carrier family 22 member 6 from Rattus norvegicus (Rat).